The following is a 293-amino-acid chain: Ribokinase (293 aa).

Residues 11 to 13 (SMD), 39 to 43 (GKGAN), and glutamate 139 contribute to the substrate site. Residues asparagine 183 and 210-215 (TEGKQG) each bind ATP. K(+) is bound by residues aspartate 236 and threonine 238. Residues 241-242 (GD) and asparagine 266 contribute to the ATP site. Aspartate 242 lines the substrate pocket. Aspartate 242 acts as the Proton acceptor in catalysis. The K(+) site is built by serine 272, serine 275, and glycine 277.

The protein belongs to the carbohydrate kinase PfkB family. Ribokinase subfamily. In terms of assembly, homodimer. Mg(2+) is required as a cofactor.

The protein localises to the cytoplasm. It carries out the reaction D-ribose + ATP = D-ribose 5-phosphate + ADP + H(+). It functions in the pathway carbohydrate metabolism; D-ribose degradation; D-ribose 5-phosphate from beta-D-ribopyranose: step 2/2. Activated by a monovalent cation that binds near, but not in, the active site. The most likely occupant of the site in vivo is potassium. Ion binding induces a conformational change that may alter substrate affinity. In terms of biological role, catalyzes the phosphorylation of ribose at O-5 in a reaction requiring ATP and magnesium. The resulting D-ribose-5-phosphate can then be used either for sythesis of nucleotides, histidine, and tryptophan, or as a component of the pentose phosphate pathway. The protein is Ribokinase of Bacillus subtilis (strain 168).